The following is an 867-amino-acid chain: Leucine--tRNA ligase (867 aa).

Positions 57 to 67 (PYPSGTLHMGH) match the 'HIGH' region motif. The disordered stretch occupies residues 308–327 (SQDERTSDDQPKRGVPTGAV). A compositionally biased stretch (basic and acidic residues) spans 309 to 319 (QDERTSDDQPK). A 'KMSKS' region motif is present at residues 631 to 635 (KMSKS). Residue Lys634 participates in ATP binding.

This sequence belongs to the class-I aminoacyl-tRNA synthetase family.

It is found in the cytoplasm. It carries out the reaction tRNA(Leu) + L-leucine + ATP = L-leucyl-tRNA(Leu) + AMP + diphosphate. The protein is Leucine--tRNA ligase of Synechococcus sp. (strain CC9311).